The sequence spans 147 residues: Nucleoside diphosphate kinase (147 aa).

ATP contacts are provided by K9, R85, T91, R102, and N112. The active-site Pros-phosphohistidine intermediate is H115.

Belongs to the NDK family. Mg(2+) serves as cofactor.

It carries out the reaction a 2'-deoxyribonucleoside 5'-diphosphate + ATP = a 2'-deoxyribonucleoside 5'-triphosphate + ADP. It catalyses the reaction a ribonucleoside 5'-diphosphate + ATP = a ribonucleoside 5'-triphosphate + ADP. Major role in the synthesis of nucleoside triphosphates other than ATP. The ATP gamma phosphate is transferred to the NDP beta phosphate via a ping-pong mechanism, using a phosphorylated active-site intermediate. In Encephalitozoon cuniculi (strain GB-M1) (Microsporidian parasite), this protein is Nucleoside diphosphate kinase (NDK1).